Consider the following 236-residue polypeptide: Small ribosomal subunit protein uS3 (236 aa).

In terms of domain architecture, KH type-2 spans 39–107 (IREFLTEELK…DTSLNIVEVR (69 aa)). A disordered region spans residues 214 to 236 (ASERRAVEGDNQGSSSNRRRENA).

Belongs to the universal ribosomal protein uS3 family. In terms of assembly, part of the 30S ribosomal subunit. Forms a tight complex with proteins S10 and S14.

Its function is as follows. Binds the lower part of the 30S subunit head. Binds mRNA in the 70S ribosome, positioning it for translation. This Brucella abortus (strain S19) protein is Small ribosomal subunit protein uS3.